A 199-amino-acid polypeptide reads, in one-letter code: Protein-methionine-sulfoxide reductase heme-binding subunit MsrQ (199 aa).

4 helical membrane-spanning segments follow: residues 10–30, 82–102, 116–136, and 153–173; these read WLKV…FWAI, LWCF…ELGI, PYLT…LTST, and VVYL…KILS.

This sequence belongs to the MsrQ family. As to quaternary structure, heterodimer of a catalytic subunit (MsrP) and a heme-binding subunit (MsrQ). Requires FMN as cofactor. It depends on heme b as a cofactor.

It is found in the cell inner membrane. Part of the MsrPQ system that repairs oxidized periplasmic proteins containing methionine sulfoxide residues (Met-O), using respiratory chain electrons. Thus protects these proteins from oxidative-stress damage caused by reactive species of oxygen and chlorine generated by the host defense mechanisms. MsrPQ is essential for the maintenance of envelope integrity under bleach stress, rescuing a wide series of structurally unrelated periplasmic proteins from methionine oxidation, including the primary periplasmic chaperone SurA and the lipoprotein Pal. MsrQ provides electrons for reduction to the reductase catalytic subunit MsrP, using the quinone pool of the respiratory chain. This chain is Protein-methionine-sulfoxide reductase heme-binding subunit MsrQ, found in Salmonella newport (strain SL254).